Here is a 497-residue protein sequence, read N- to C-terminus: Probable malate:quinone oxidoreductase (497 aa).

The protein belongs to the MQO family. It depends on FAD as a cofactor.

It carries out the reaction (S)-malate + a quinone = a quinol + oxaloacetate. Its pathway is carbohydrate metabolism; tricarboxylic acid cycle; oxaloacetate from (S)-malate (quinone route): step 1/1. The polypeptide is Probable malate:quinone oxidoreductase (Rhodopseudomonas palustris (strain ATCC BAA-98 / CGA009)).